A 120-amino-acid chain; its full sequence is ATP-dependent Clp protease adapter protein ClpS (120 aa).

It belongs to the ClpS family. As to quaternary structure, binds to the N-terminal domain of the chaperone ClpA.

Involved in the modulation of the specificity of the ClpAP-mediated ATP-dependent protein degradation. In Pseudomonas fluorescens (strain ATCC BAA-477 / NRRL B-23932 / Pf-5), this protein is ATP-dependent Clp protease adapter protein ClpS.